The following is a 184-amino-acid chain: Shikimate kinase (184 aa).

ATP is bound at residue 18–23 (GAGKTT). Residue Thr-22 participates in Mg(2+) binding. Substrate contacts are provided by Asp-40, Arg-64, and Gly-86. Arg-124 is an ATP binding site. Position 143 (Arg-143) interacts with substrate. ATP is bound at residue Gln-160.

This sequence belongs to the shikimate kinase family. Monomer. It depends on Mg(2+) as a cofactor.

It is found in the cytoplasm. It catalyses the reaction shikimate + ATP = 3-phosphoshikimate + ADP + H(+). It functions in the pathway metabolic intermediate biosynthesis; chorismate biosynthesis; chorismate from D-erythrose 4-phosphate and phosphoenolpyruvate: step 5/7. Functionally, catalyzes the specific phosphorylation of the 3-hydroxyl group of shikimic acid using ATP as a cosubstrate. The protein is Shikimate kinase of Chromobacterium violaceum (strain ATCC 12472 / DSM 30191 / JCM 1249 / CCUG 213 / NBRC 12614 / NCIMB 9131 / NCTC 9757 / MK).